The primary structure comprises 188 residues: MTRVVLSVGSNLGDRLARLRSVADGLGDALIAASPIYEADPWGGVEQGQFLNAVLIADDPTCEPREWLRRAQEFERAAGRVRGQRWGPRNLDVDLIACYQTSATEALVEVTARENHLTLPHPLAHLRAFVLIPWIAVDPTAQLTVAGCPRPVTRLLAELEPADRDSVRLFRPSFDLNSRHPVSRAPES.

Belongs to the HPPK family.

The catalysed reaction is 6-hydroxymethyl-7,8-dihydropterin + ATP = (7,8-dihydropterin-6-yl)methyl diphosphate + AMP + H(+). The protein operates within cofactor biosynthesis; tetrahydrofolate biosynthesis; 2-amino-4-hydroxy-6-hydroxymethyl-7,8-dihydropteridine diphosphate from 7,8-dihydroneopterin triphosphate: step 4/4. In terms of biological role, catalyzes the transfer of pyrophosphate from adenosine triphosphate (ATP) to 6-hydroxymethyl-7,8-dihydropterin, an enzymatic step in folate biosynthesis pathway. This chain is 2-amino-4-hydroxy-6-hydroxymethyldihydropteridine pyrophosphokinase (folK), found in Mycobacterium tuberculosis (strain ATCC 25618 / H37Rv).